A 228-amino-acid polypeptide reads, in one-letter code: MEDSRVYLDRSNATPSYIPVTPQIPVPGLGHRRVKREHVQVDEEPTVQILIKRPKVEDEEVPIPIFPPLPPARDPVAAVAAAGGQIVRRRRRRVPGTAMGVDTVDVVLPVGVRYHPSIEAARPPAVPPPRAVPPVGVRYHPSIEVARPPAARISPPRRRRRRRRSPRPRATAAYRSSAEVVERRRRVAQTVPVVRYHPSIQVEPAVHPPLAPRLPVQMAYTRYHPTIH.

The tract at residues 146–177 (ARPPAARISPPRRRRRRRRSPRPRATAAYRSS) is disordered. A compositionally biased stretch (basic residues) spans 155-167 (PPRRRRRRRRSPR). The span at 168–177 (PRATAAYRSS) shows a compositional bias: low complexity.

This sequence belongs to the adenoviridae core-capsid bridging protein family. In terms of assembly, monomer. Homodimer. Exists in equilibrium between monomers and dimers in solution. Interacts with the histone-like nucleoprotein; this interactions bridge the virus core to the capsid. Interacts with core protein X; this interactions bridge the virus core to the capsid. Interacts with the endosome lysis protein VI; this interactions bridge the virus core to the capsid. Interacts with the peripentonal hexons. Interacts with host NPM1; this interaction might play a role in virus assembly.

The protein localises to the virion. It localises to the host nucleus. It is found in the host nucleolus. In terms of biological role, associates loosely with the viral DNA to form an outer shell around the nucleoprotein-DNA complex and links it with the capsid by binding the endosome lysis protein. Dissociates from the viral genome during entry. Might be involved in nuclear capsid assembly of the viral particles through its association with NPM1/nucleophosmin. This chain is Core-capsid bridging protein, found in Murine adenovirus A serotype 1 (MAdV-1).